Consider the following 464-residue polypeptide: Kynurenine 3-monooxygenase (464 aa).

The protein belongs to the aromatic-ring hydroxylase family. KMO subfamily. It depends on FAD as a cofactor.

The enzyme catalyses L-kynurenine + NADPH + O2 + H(+) = 3-hydroxy-L-kynurenine + NADP(+) + H2O. The protein operates within cofactor biosynthesis; NAD(+) biosynthesis; quinolinate from L-kynurenine: step 1/3. In terms of biological role, catalyzes the hydroxylation of L-kynurenine (L-Kyn) to form 3-hydroxy-L-kynurenine (L-3OHKyn). Required for synthesis of quinolinic acid. This Myxococcus xanthus (strain DK1622) protein is Kynurenine 3-monooxygenase.